Consider the following 379-residue polypeptide: Putative clathrin assembly protein At1g68110 (379 aa).

One can recognise an ENTH domain in the interval 26-158 (NSSYRNADLE…SFLSDQIHRL (133 aa)).

Its subcellular location is the membrane. It localises to the clathrin-coated pit. It is found in the golgi apparatus. The protein localises to the cytoplasmic vesicle. The protein resides in the clathrin-coated vesicle. The chain is Putative clathrin assembly protein At1g68110 from Arabidopsis thaliana (Mouse-ear cress).